A 482-amino-acid chain; its full sequence is Regulator of nonsense transcripts UPF3 (482 aa).

Residues lysine 9–histidine 14 are binds to UPF2. The necessary for interaction with UPF2 stretch occupies residues lysine 9–arginine 219. The segment at tyrosine 53 to threonine 482 is sufficient for association with EJC core. A disordered region spans residues proline 173–threonine 482. A compositionally biased stretch (basic and acidic residues) spans arginine 201–serine 214. 3 stretches are compositionally biased toward polar residues: residues alanine 223 to glycine 239, aspartate 292 to serine 308, and arginine 325 to glutamate 336. 2 stretches are compositionally biased toward basic and acidic residues: residues glutamine 337–lysine 348 and glutamate 370–serine 394. Positions serine 414 to arginine 435 are enriched in polar residues.

Belongs to the RENT3 family. In terms of assembly, found in a post-splicing messenger ribonucleoprotein (mRNP) complex. Associates with the exon junction complex (EJC). Interacts with CPL1/FRY2.

It localises to the nucleus. The protein resides in the nucleolus. The protein localises to the cytoplasm. Its function is as follows. Recruits UPF2 at the cytoplasmic side of the nuclear envelope and the subsequent formation of an UPF1-UPF2-UPF3 surveillance complex (including UPF1 bound to release factors at the stalled ribosome) is believed to activate NMD. Binds spliced mRNA upstream of exon-exon junctions. Involved in nonsense-mediated decay (NMD) of mRNAs containing premature stop codons (premature termination codon PTC) by associating with the nuclear exon junction complex (EJC) and serving as link between the EJC core and NMD machinery. Eliminates the production of nonsense-containing RNAs (ncRNAs). Required for plant development and adaptation to environmental stresses, including plant defense and response to wounding. The chain is Regulator of nonsense transcripts UPF3 from Arabidopsis thaliana (Mouse-ear cress).